The sequence spans 251 residues: Triosephosphate isomerase (251 aa).

9 to 11 (NWK) serves as a coordination point for substrate. Residue histidine 95 is the Electrophile of the active site. The active-site Proton acceptor is glutamate 167. Residues glycine 173, serine 212, and 233-234 (GG) each bind substrate.

It belongs to the triosephosphate isomerase family. In terms of assembly, homodimer.

Its subcellular location is the cytoplasm. It carries out the reaction D-glyceraldehyde 3-phosphate = dihydroxyacetone phosphate. It participates in carbohydrate biosynthesis; gluconeogenesis. The protein operates within carbohydrate degradation; glycolysis; D-glyceraldehyde 3-phosphate from glycerone phosphate: step 1/1. In terms of biological role, involved in the gluconeogenesis. Catalyzes stereospecifically the conversion of dihydroxyacetone phosphate (DHAP) to D-glyceraldehyde-3-phosphate (G3P). This chain is Triosephosphate isomerase, found in Pseudomonas entomophila (strain L48).